A 560-amino-acid chain; its full sequence is Membrane protein insertase YidC (560 aa).

6 helical membrane passes run 5–25, 334–354, 357–377, 431–451, 476–496, and 522–542; these read IINLIAAVVLSLSIIFGWQYF, AIDFGWFYIITKPVFYAMNFF, YVGNFGISILIVTVIIKLLMF, LPILVQIPVFFSIYKVLYVTI, LFGLLPFAPPSFLMIGAWPIL, and FMPLIFLFMFSSFPVGLLIYW.

Belongs to the OXA1/ALB3/YidC family. Type 1 subfamily. As to quaternary structure, interacts with the Sec translocase complex via SecD. Specifically interacts with transmembrane segments of nascent integral membrane proteins during membrane integration.

It is found in the cell inner membrane. Functionally, required for the insertion and/or proper folding and/or complex formation of integral membrane proteins into the membrane. Involved in integration of membrane proteins that insert both dependently and independently of the Sec translocase complex, as well as at least some lipoproteins. Aids folding of multispanning membrane proteins. The protein is Membrane protein insertase YidC of Rickettsia prowazekii (strain Madrid E).